The following is a 214-amino-acid chain: Pyridoxine/pyridoxamine 5'-phosphate oxidase (214 aa).

Residues 8–11 (RTNY) and Lys-66 each bind substrate. Residues 61–66 (RIVLIK), 76–77 (FT), Arg-82, Lys-83, and Gln-105 contribute to the FMN site. The substrate site is built by Tyr-123, Arg-127, and Ser-131. FMN contacts are provided by residues 140–141 (QS) and Trp-184. Position 190-192 (190-192 (RLH)) interacts with substrate. Arg-194 is an FMN binding site.

The protein belongs to the pyridoxamine 5'-phosphate oxidase family. As to quaternary structure, homodimer. FMN serves as cofactor.

It catalyses the reaction pyridoxamine 5'-phosphate + O2 + H2O = pyridoxal 5'-phosphate + H2O2 + NH4(+). The catalysed reaction is pyridoxine 5'-phosphate + O2 = pyridoxal 5'-phosphate + H2O2. It functions in the pathway cofactor metabolism; pyridoxal 5'-phosphate salvage; pyridoxal 5'-phosphate from pyridoxamine 5'-phosphate: step 1/1. The protein operates within cofactor metabolism; pyridoxal 5'-phosphate salvage; pyridoxal 5'-phosphate from pyridoxine 5'-phosphate: step 1/1. In terms of biological role, catalyzes the oxidation of either pyridoxine 5'-phosphate (PNP) or pyridoxamine 5'-phosphate (PMP) into pyridoxal 5'-phosphate (PLP). The chain is Pyridoxine/pyridoxamine 5'-phosphate oxidase from Burkholderia pseudomallei (strain 1106a).